The sequence spans 231 residues: Ion-translocating oxidoreductase complex subunit E (231 aa).

Transmembrane regions (helical) follow at residues 18-38, 39-59, 69-89, 93-113, 128-148, and 182-202; these read GLVQ…VTNA, LGLG…VSLV, IPVF…LINA, GLYL…VIIG, AFDG…LGAG, and PFLL…LIAG.

Belongs to the NqrDE/RnfAE family. In terms of assembly, the complex is composed of six subunits: RnfA, RnfB, RnfC, RnfD, RnfE and RnfG.

It is found in the cell inner membrane. Its function is as follows. Part of a membrane-bound complex that couples electron transfer with translocation of ions across the membrane. The sequence is that of Ion-translocating oxidoreductase complex subunit E from Shewanella denitrificans (strain OS217 / ATCC BAA-1090 / DSM 15013).